We begin with the raw amino-acid sequence, 137 residues long: Large ribosomal subunit protein uL16 (137 aa).

The protein belongs to the universal ribosomal protein uL16 family. As to quaternary structure, part of the 50S ribosomal subunit.

Its function is as follows. Binds 23S rRNA and is also seen to make contacts with the A and possibly P site tRNAs. In Rhizobium meliloti (strain 1021) (Ensifer meliloti), this protein is Large ribosomal subunit protein uL16.